Reading from the N-terminus, the 324-residue chain is Beta-ketoacyl-[acyl-carrier-protein] synthase III (324 aa).

Cys-112 is an active-site residue. The disordered stretch occupies residues 181-202 (TDGSRGQNLTSGNNPLRSPFSD). Over residues 184-196 (SRGQNLTSGNNPL) the composition is skewed to polar residues. His-249 is a catalytic residue. The segment at 250–254 (QANRR) is ACP-binding. Asn-279 is an active-site residue.

The protein belongs to the thiolase-like superfamily. FabH family. In terms of assembly, homodimer.

It is found in the cytoplasm. It catalyses the reaction malonyl-[ACP] + acetyl-CoA + H(+) = 3-oxobutanoyl-[ACP] + CO2 + CoA. It participates in lipid metabolism; fatty acid biosynthesis. Its function is as follows. Catalyzes the condensation reaction of fatty acid synthesis by the addition to an acyl acceptor of two carbons from malonyl-ACP. Catalyzes the first condensation reaction which initiates fatty acid synthesis and may therefore play a role in governing the total rate of fatty acid production. Possesses both acetoacetyl-ACP synthase and acetyl transacylase activities. Its substrate specificity determines the biosynthesis of branched-chain and/or straight-chain of fatty acids. The chain is Beta-ketoacyl-[acyl-carrier-protein] synthase III from Streptococcus uberis (strain ATCC BAA-854 / 0140J).